Consider the following 253-residue polypeptide: Aspartate/glutamate leucyltransferase (253 aa).

This sequence belongs to the R-transferase family. Bpt subfamily.

It is found in the cytoplasm. It carries out the reaction N-terminal L-glutamyl-[protein] + L-leucyl-tRNA(Leu) = N-terminal L-leucyl-L-glutamyl-[protein] + tRNA(Leu) + H(+). The enzyme catalyses N-terminal L-aspartyl-[protein] + L-leucyl-tRNA(Leu) = N-terminal L-leucyl-L-aspartyl-[protein] + tRNA(Leu) + H(+). In terms of biological role, functions in the N-end rule pathway of protein degradation where it conjugates Leu from its aminoacyl-tRNA to the N-termini of proteins containing an N-terminal aspartate or glutamate. The protein is Aspartate/glutamate leucyltransferase of Allorhizobium ampelinum (strain ATCC BAA-846 / DSM 112012 / S4) (Agrobacterium vitis (strain S4)).